A 465-amino-acid chain; its full sequence is Phytase A (465 aa).

The first 26 residues, 1–26 (MVTLTFLLSAAYLLSGRVSAAPSSAG), serve as a signal peptide directing secretion. A disulfide bridge links cysteine 30 with cysteine 39. Glutamine 49, tyrosine 50, arginine 80, histidine 81, arginine 84, and threonine 87 together coordinate 1D-myo-inositol hexakisphosphate. Disulfide bonds link cysteine 70-cysteine 412, cysteine 213-cysteine 463, cysteine 262-cysteine 280, and cysteine 434-cysteine 442. The active-site Nucleophile is the histidine 81. Asparagine 104 is a glycosylation site (N-linked (GlcNAc...) asparagine). Residue arginine 164 coordinates 1D-myo-inositol hexakisphosphate. Asparagine 205 carries an N-linked (GlcNAc...) asparagine glycan. Aspartate 209 lines the 1D-myo-inositol hexakisphosphate pocket. An N-linked (GlcNAc...) asparagine glycan is attached at asparagine 228. Lysine 299 contributes to the 1D-myo-inositol hexakisphosphate binding site. N-linked (GlcNAc...) asparagine glycans are attached at residues asparagine 337 and asparagine 350. Positions 359 and 360 each coordinate 1D-myo-inositol hexakisphosphate. Asparagine 374 carries an N-linked (GlcNAc...) asparagine glycan.

The protein belongs to the histidine acid phosphatase family. In terms of assembly, monomer.

The protein localises to the secreted. It carries out the reaction 1D-myo-inositol hexakisphosphate + H2O = 1D-myo-inositol 1,2,4,5,6-pentakisphosphate + phosphate. The enzyme catalyses 1D-myo-inositol 1,2,4,5,6-pentakisphosphate + H2O = 1D-myo-inositol 1,2,5,6-tetrakisphosphate + phosphate. The catalysed reaction is 1D-myo-inositol 1,2,5,6-tetrakisphosphate + H2O = 1D-myo-inositol 1,2,6-trisphosphate + phosphate. It catalyses the reaction 1D-myo-inositol 1,2,6-trisphosphate + H2O = 1D-myo-inositol 1,2-bisphosphate + phosphate. It carries out the reaction 1D-myo-inositol 1,2-bisphosphate + H2O = 1D-myo-inositol 2-phosphate + phosphate. Functionally, catalyzes the phosphate monoester hydrolysis of phytic acid (myo-inositol hexakisphosphate), which results in the stepwise formation of myo-inositol pentakis-, tetrakis-, tris-, bis-, and monophosphates, as well as the liberation of inorganic phosphate. Myo-inositol 2-monophosphate is the end product. Has a broad substrate specificity and is also able to dephosphorylate other classic acid phosphatase substrates such as p-nitrophenyl phosphate, phenyl phosphate, fructose 1,6-bisphosphate, fructose 6-phosphate, glucose 6-phosphate, ribose 5-phosphate, alpha-glycerophosphate, beta-glycerophosphate, 3-phosphoglycerate, phosphoenolpyruvate, as well as ADP and ATP. The chain is Phytase A (phyA) from Aspergillus fumigatus (strain ATCC MYA-4609 / CBS 101355 / FGSC A1100 / Af293) (Neosartorya fumigata).